Consider the following 524-residue polypeptide: Inorganic phosphate transporter 1-1 (524 aa).

At 1-24 (MAEQQLGVLKALDVAKTQLYHFTA) the chain is on the cytoplasmic side. Residues 25 to 45 (IVIAGMGFFTDAYDLFCVSLV) traverse the membrane as a helical segment. The Extracellular segment spans residues 46-70 (TKLLGRIYYFNPESAKPGSLPPHVA). The chain crosses the membrane as a helical span at residues 71-91 (AAVNGVALCGTLSGQLFFGWL). At 92 to 99 (GDKLGRKK) the chain is on the cytoplasmic side. The helical transmembrane segment at 100–120 (VYGLTLVMMILCSVASGLSFG) threads the bilayer. Residues 121 to 131 (HEAKGVMTTLC) are Extracellular-facing. A helical transmembrane segment spans residues 132-152 (FFRFWLGFGIGGDYPLSATIM). The Cytoplasmic portion of the chain corresponds to 153–161 (SEYANKKTR). Residues 162–182 (GAFIAAVFAMQGVGILAGGFV) form a helical membrane-spanning segment. Topologically, residues 183–211 (ALAVSSIFDKKFPAPTYAVNRALSTPPQV) are extracellular. Residues 212-232 (DYIWRIIVMFGALPAALTYYW) form a helical membrane-spanning segment. At 233–292 (RMKMPETARYTALVAKNIKQATADMSKVLQTDIELEERVEDDVKDPKQNYGLFSKEFLRR) the chain is on the cytoplasmic side. Residues 293–313 (HGLHLLGTTSTWFLLDIAFYS) traverse the membrane as a helical segment. The Extracellular portion of the chain corresponds to 314–348 (QNLFQKDIFSAIGWIPKAATMNATHEVFRIARAQT). A helical membrane pass occupies residues 349–369 (LIALCSTVPGYWFTVAFIDTI). The Cytoplasmic segment spans residues 370–371 (GR). The helical transmembrane segment at 372 to 392 (FKIQLNGFFMMTVFMFAIAFP) threads the bilayer. At 393-402 (YNHWIKPENR) the chain is on the extracellular side. A helical transmembrane segment spans residues 403 to 423 (IGFVVMYSLTFFFANFGPNAT). Over 424–441 (TFIVPAEIFPARLRSTCH) the chain is Cytoplasmic. A helical transmembrane segment spans residues 442-462 (GISAAAGKAGAIVGAFGFLYA). Over 463 to 484 (AQSQDKAKVDAGYPPGIGVKNS) the chain is Extracellular. A helical transmembrane segment spans residues 485–505 (LIMLGVLNFIGMLFTFLVPEP). The Cytoplasmic portion of the chain corresponds to 506-524 (KGKSLEELSGEAEVSHDEK).

Belongs to the major facilitator superfamily. Phosphate:H(+) symporter (TC 2.A.1.9) family. As to quaternary structure, interacts with NLA. Ubiquitinated by NLA. Ubiquitination of PHT1-1 leads to its degradation by the proteasome. As to expression, mostly expressed in roots, especially in trichoblasts and in emerging secondary roots and root hairs, but not in root tips. Also present in hydathodes, axillary buds and peripheral endosperm of germinating seeds.

Its subcellular location is the cell membrane. With respect to regulation, inhibited by protonophores (e.g. 2,4-dinitrophenol and carbonylcyanide m-chlorophenylhydrazone), the plasma membrane H(+)-ATPase inhibitor diethylstilbestorol, and the phosphate analog arsenate. Its function is as follows. High-affinity transporter for external inorganic phosphate. Acts as a H(+):phosphate symporter in both low- and high-Pi conditions. Confers sensitivity to arsenate. The polypeptide is Inorganic phosphate transporter 1-1 (PHT1-1) (Arabidopsis thaliana (Mouse-ear cress)).